Consider the following 363-residue polypeptide: Anhydro-N-acetylmuramic acid kinase (363 aa).

10-17 (GTSLDGLD) provides a ligand contact to ATP.

The protein belongs to the anhydro-N-acetylmuramic acid kinase family.

It carries out the reaction 1,6-anhydro-N-acetyl-beta-muramate + ATP + H2O = N-acetyl-D-muramate 6-phosphate + ADP + H(+). The protein operates within amino-sugar metabolism; 1,6-anhydro-N-acetylmuramate degradation. It participates in cell wall biogenesis; peptidoglycan recycling. In terms of biological role, catalyzes the specific phosphorylation of 1,6-anhydro-N-acetylmuramic acid (anhMurNAc) with the simultaneous cleavage of the 1,6-anhydro ring, generating MurNAc-6-P. Is required for the utilization of anhMurNAc either imported from the medium or derived from its own cell wall murein, and thus plays a role in cell wall recycling. In Pseudomonas fluorescens (strain Pf0-1), this protein is Anhydro-N-acetylmuramic acid kinase.